The chain runs to 311 residues: Putative HTH-type transcriptional regulatory protein MTH_967 (311 aa).

One can recognise an HTH cro/C1-type domain in the interval 134-192; that stretch reads LREVREEYNLSLKDLADLAHVSRKTIYKYENGLARASAETAMILEEILNIRITLSIDIF. The segment at residues 145 to 164 is a DNA-binding region (H-T-H motif); the sequence is LKDLADLAHVSRKTIYKYEN.

This chain is Putative HTH-type transcriptional regulatory protein MTH_967, found in Methanothermobacter thermautotrophicus (strain ATCC 29096 / DSM 1053 / JCM 10044 / NBRC 100330 / Delta H) (Methanobacterium thermoautotrophicum).